Here is a 1064-residue protein sequence, read N- to C-terminus: Lysine-specific demethylase 4A (1064 aa).

N-acetylalanine is present on alanine 2. A JmjN domain is found at isoleucine 14–arginine 56. 2-oxoglutarate is bound at residue tyrosine 132. One can recognise a JmjC domain in the interval glutamate 142 to cysteine 308. The Fe cation site is built by histidine 188 and glutamate 190. 2-oxoglutarate-binding residues include asparagine 198 and lysine 206. Cysteine 234 and histidine 240 together coordinate Zn(2+). Lysine 241 serves as a coordination point for 2-oxoglutarate. Histidine 276 lines the Fe cation pocket. Cysteine 306 and cysteine 308 together coordinate Zn(2+). The tract at residues glutamate 358–aspartate 384 is disordered. Acidic residues predominate over residues glutamate 366–glutamate 382. A (Microbial infection) Glycyl lysine isopeptide (Lys-Gly) (interchain with G-Cter in SUMO) cross-link involves residue lysine 471. Disordered regions lie at residues phenylalanine 501–glycine 537 and serine 616–serine 641. Residues serine 509–serine 532 show a composition bias toward low complexity. Phosphoserine is present on serine 523. Residues arginine 597–lysine 638 are interaction with NCOR1. Acidic residues predominate over residues serine 616–glutamate 634. The segment at methionine 709–serine 767 adopts a PHD-type 1 zinc-finger fold. The segment at glutamate 772–alanine 805 adopts a C2HC pre-PHD-type zinc-finger fold. The PHD-type 2 zinc finger occupies leucine 828–lysine 885. Tudor domains lie at glutamine 897–phenylalanine 954 and glycine 955–proline 1011.

The protein belongs to the JHDM3 histone demethylase family. In terms of assembly, interacts with histone deacetylase proteins HDAC1, HDAC2 and HDAC3. Interacts with RB and NCOR1. Interacts with VRK1. Interacts with FBXO22; this interaction promotes KDM4A ubiquitination. As to quaternary structure, (Microbial infection) Interacts with HTLV-1 Tax protein. The cofactor is Fe(2+). Post-translationally, (Microbial infection) SUMOylated by human herpesvirus 8 E3 SUMO-protein ligase K-bZIP/K8 at Lys-471; thereby modulating the chromatin binding and histone demethylase activity of KDM4A. Ubiquitinated by RNF8 and RNF168 following DNA damage, leading to its degradation. Degradation promotes accessibility of H4K20me2 mark for DNA repair protein TP53BP1, which is then recruited. Also ubiquitinated by the SCF(FBXO22) complex; leading to proteasomal degradation. Ubiquitous.

The protein resides in the nucleus. It carries out the reaction N(6),N(6),N(6)-trimethyl-L-lysyl(9)-[histone H3] + 2 2-oxoglutarate + 2 O2 = N(6)-methyl-L-lysyl(9)-[histone H3] + 2 formaldehyde + 2 succinate + 2 CO2. The catalysed reaction is N(6),N(6),N(6)-trimethyl-L-lysyl(36)-[histone H3] + 2 2-oxoglutarate + 2 O2 = N(6)-methyl-L-lysyl(36)-[histone H3] + 2 formaldehyde + 2 succinate + 2 CO2. With respect to regulation, several specific inhibitors are being developed and tested. Histone demethylase that specifically demethylates 'Lys-9' and 'Lys-36' residues of histone H3, thereby playing a central role in histone code. Does not demethylate histone H3 'Lys-4', H3 'Lys-27' nor H4 'Lys-20'. Demethylates trimethylated H3 'Lys-9' and H3 'Lys-36' residue, while it has no activity on mono- and dimethylated residues. Demethylation of Lys residue generates formaldehyde and succinate. Participates in transcriptional repression of ASCL2 and E2F-responsive promoters via the recruitment of histone deacetylases and NCOR1, respectively. Its function is as follows. Crucial for muscle differentiation, promotes transcriptional activation of the Myog gene by directing the removal of repressive chromatin marks at its promoter. Lacks the N-terminal demethylase domain. This Homo sapiens (Human) protein is Lysine-specific demethylase 4A (KDM4A).